Reading from the N-terminus, the 132-residue chain is Large ribosomal subunit protein bL12 (132 aa).

Positions Lys112 to Lys132 are disordered.

This sequence belongs to the bacterial ribosomal protein bL12 family. Homodimer. Part of the ribosomal stalk of the 50S ribosomal subunit. Forms a multimeric L10(L12)X complex, where L10 forms an elongated spine to which 2 to 4 L12 dimers bind in a sequential fashion. Binds GTP-bound translation factors.

In terms of biological role, forms part of the ribosomal stalk which helps the ribosome interact with GTP-bound translation factors. Is thus essential for accurate translation. The polypeptide is Large ribosomal subunit protein bL12 (Leifsonia xyli subsp. xyli (strain CTCB07)).